A 379-amino-acid chain; its full sequence is Tryptophan 2,3-dioxygenase (379 aa).

Substrate-binding positions include Phe-57 to His-61 and Arg-128. His-312 is a binding site for heme. Thr-327 lines the substrate pocket.

Belongs to the tryptophan 2,3-dioxygenase family. In terms of assembly, homotetramer. Dimer of dimers. Requires heme as cofactor.

The enzyme catalyses L-tryptophan + O2 = N-formyl-L-kynurenine. The protein operates within amino-acid degradation; L-tryptophan degradation via kynurenine pathway; L-kynurenine from L-tryptophan: step 1/2. Its pathway is pigment biosynthesis; ommochrome biosynthesis. Its function is as follows. Heme-dependent dioxygenase that catalyzes the oxidative cleavage of the L-tryptophan (L-Trp) pyrrole ring and converts L-tryptophan to N-formyl-L-kynurenine. Catalyzes the oxidative cleavage of the indole moiety. The protein is Tryptophan 2,3-dioxygenase of Drosophila yakuba (Fruit fly).